We begin with the raw amino-acid sequence, 306 residues long: MSVKQKSALQDLVDFAKWHVWTRVRPSSRARLAYELFADDHEATTEGAYINLGYWKPGCAGLEEANQELANQLAEAAGISEGDEVLDVGFGLGAQDFFWLETRKPARIVGVDLTPSHVRIASERAERENVQDRLQFKEGSATDLPFGAETFDRVTSLESALHYEPRTDFFKGAFEVLKPGGVLAIGDIIPLDLREPGSDGPPKLAPQRSGSLSGGIPVENWVPRETYAKQLREAGFVDVEVKSVRDNVMEPWLDYWLRKLQDESFKKSVSRLFYSQVKRSLTSDSGMKGELPALDFVIASARKPGA.

2 residues coordinate S-adenosyl-L-methionine: Leu157 and His162.

This sequence belongs to the methyltransferase superfamily.

The catalysed reaction is erythromycin C + S-adenosyl-L-methionine = erythromycin A + S-adenosyl-L-homocysteine + H(+). It catalyses the reaction erythromycin D + S-adenosyl-L-methionine = erythromycin B + S-adenosyl-L-homocysteine + H(+). Its pathway is antibiotic biosynthesis; erythromycin biosynthesis. S-adenosyl-L-methionine-dependent O-methyltransferase that catalyzes the last step in the erythromycin biosynthesis pathway. Methylates the position 3 of the mycarosyl moiety of erythromycin C, forming the most active form of the antibiotic, erythromycin A. Can also methylate the precursor erythromycin D, forming erythromycin B. This chain is Erythromycin 3''-O-methyltransferase (eryG), found in Saccharopolyspora erythraea (strain ATCC 11635 / DSM 40517 / JCM 4748 / NBRC 13426 / NCIMB 8594 / NRRL 2338).